The sequence spans 127 residues: Large ribosomal subunit protein bL21 (127 aa).

This sequence belongs to the bacterial ribosomal protein bL21 family. In terms of assembly, part of the 50S ribosomal subunit. Contacts protein L20.

In terms of biological role, this protein binds to 23S rRNA in the presence of protein L20. This chain is Large ribosomal subunit protein bL21, found in Blochmanniella floridana.